An 876-amino-acid chain; its full sequence is Valine--tRNA ligase (876 aa).

The short motif at 44-54 (PNVTGKLHLGH) is the 'HIGH' region element. The 'KMSKS' region signature appears at 520-524 (KMSKS). Lys523 contacts ATP. A coiled-coil region spans residues 805–876 (LEGLIDMDKE…VKNRIEQLKA (72 aa)).

The protein belongs to the class-I aminoacyl-tRNA synthetase family. ValS type 1 subfamily. In terms of assembly, monomer.

It is found in the cytoplasm. The enzyme catalyses tRNA(Val) + L-valine + ATP = L-valyl-tRNA(Val) + AMP + diphosphate. In terms of biological role, catalyzes the attachment of valine to tRNA(Val). As ValRS can inadvertently accommodate and process structurally similar amino acids such as threonine, to avoid such errors, it has a 'posttransfer' editing activity that hydrolyzes mischarged Thr-tRNA(Val) in a tRNA-dependent manner. The sequence is that of Valine--tRNA ligase from Staphylococcus haemolyticus (strain JCSC1435).